Here is a 137-residue protein sequence, read N- to C-terminus: ATP synthase epsilon chain, chloroplastic (137 aa).

Belongs to the ATPase epsilon chain family. As to quaternary structure, F-type ATPases have 2 components, CF(1) - the catalytic core - and CF(0) - the membrane proton channel. CF(1) has five subunits: alpha(3), beta(3), gamma(1), delta(1), epsilon(1). CF(0) has three main subunits: a, b and c.

The protein localises to the plastid. Its subcellular location is the chloroplast thylakoid membrane. In terms of biological role, produces ATP from ADP in the presence of a proton gradient across the membrane. This chain is ATP synthase epsilon chain, chloroplastic, found in Sorghum bicolor (Sorghum).